A 313-amino-acid polypeptide reads, in one-letter code: Ribosomal protein L11 methyltransferase (313 aa).

S-adenosyl-L-methionine contacts are provided by Thr-164, Gly-185, Asp-207, and Asn-249.

It belongs to the methyltransferase superfamily. PrmA family.

It is found in the cytoplasm. The enzyme catalyses L-lysyl-[protein] + 3 S-adenosyl-L-methionine = N(6),N(6),N(6)-trimethyl-L-lysyl-[protein] + 3 S-adenosyl-L-homocysteine + 3 H(+). Its function is as follows. Methylates ribosomal protein L11. In Clostridium botulinum (strain Alaska E43 / Type E3), this protein is Ribosomal protein L11 methyltransferase.